The primary structure comprises 119 residues: Cysteine-rich DPF motif domain-containing protein 1 (119 aa).

Belongs to the CDPF1 family.

The sequence is that of Cysteine-rich DPF motif domain-containing protein 1 (Cdpf1) from Mus musculus (Mouse).